The chain runs to 653 residues: Multidomain regulatory protein MT1410 (653 aa).

Residues 86 to 142 (SGSEWRLQTDYDGSGVEERYFDFVVTPRRRADGSIEGVQLIVDDVTSRVRARQAAEA) form the PAC domain. Residues 177 to 396 (DIAAEYLVAA…DDVTLLAMQR (220 aa)) enclose the PPM-type phosphatase domain. The Mn(2+) site is built by Asp-211, Val-212, Asp-328, and Asp-387. Positions 397 to 544 (RAPTPPLHIT…TMVRRAAFQQ (148 aa)) are anti-sigma factor kinase region. The STAS domain occupies 546–653 (IDSEFVSLVE…ADTEDIFAQE (108 aa)). Ser-600 is subject to Phosphoserine.

Mg(2+) serves as cofactor. Requires Mn(2+) as cofactor. In terms of processing, autophosphorylated.

It carries out the reaction O-phospho-L-seryl-[protein] + H2O = L-seryl-[protein] + phosphate. The enzyme catalyses O-phospho-L-threonyl-[protein] + H2O = L-threonyl-[protein] + phosphate. The catalysed reaction is L-seryl-[protein] + ATP = O-phospho-L-seryl-[protein] + ADP + H(+). It catalyses the reaction L-threonyl-[protein] + ATP = O-phospho-L-threonyl-[protein] + ADP + H(+). Its function is as follows. Primarily acts as an independent SigF regulator that is sensitive to the osmosensory signal, mediating the cross talk of PknD with the SigF regulon. Possesses both phosphatase and kinase activities. The kinase domain functions as a classic anti-sigma factor-like kinase to phosphorylate the anti-anti-sigma factor domain at the canonical regulatory site, and the phosphatase domain antagonizes this activity. This Mycobacterium tuberculosis (strain CDC 1551 / Oshkosh) protein is Multidomain regulatory protein MT1410.